Reading from the N-terminus, the 99-residue chain is Large ribosomal subunit protein uL23 (99 aa).

The protein belongs to the universal ribosomal protein uL23 family. As to quaternary structure, part of the 50S ribosomal subunit. Contacts protein L29, and trigger factor when it is bound to the ribosome.

One of the early assembly proteins it binds 23S rRNA. One of the proteins that surrounds the polypeptide exit tunnel on the outside of the ribosome. Forms the main docking site for trigger factor binding to the ribosome. In Stenotrophomonas maltophilia (strain R551-3), this protein is Large ribosomal subunit protein uL23.